The chain runs to 102 residues: Citrate lyase acyl carrier protein (102 aa).

Residue Ser-14 is modified to O-(phosphoribosyl dephospho-coenzyme A)serine.

It belongs to the CitD family. In terms of assembly, oligomer with a subunit composition of (alpha,beta,gamma)6.

It localises to the cytoplasm. Functionally, covalent carrier of the coenzyme of citrate lyase. This chain is Citrate lyase acyl carrier protein, found in Streptococcus equi subsp. zooepidemicus (strain MGCS10565).